Consider the following 612-residue polypeptide: uncharacterized protein (612 aa).

Disordered regions lie at residues 46–113, 129–185, 313–360, 457–488, and 593–612; these read QQPQ…MVTP, QQYQ…TPTY, TKDG…GSTM, FSISGGGGSGGIPSQSGIIKKHKKPSGSSGYG, and NNTNNTNNTNNTNNNTVVTI. The segment covering 58 to 102 has biased composition (low complexity); that stretch reads HQQIPISTQSTPNSTSSTTTTTTTTTSTTTAPTSNSKKSKTTPSN. Polar residues-rich tracts occupy residues 103–113 and 129–138; these read GNKPTSGMVTP and QQYQPNSQLQ. Positions 143–169 are enriched in low complexity; the sequence is IIKKSSLSTTPNNINNNNNNNNNTNTI. Positions 175-185 are enriched in polar residues; the sequence is GGNNSAPTPTY. The span at 323-359 shows a compositional bias: low complexity; the sequence is TTSSTSTSSSATSTTSSSTSSTTTTSSTSNSSTPGST.

This is an uncharacterized protein from Dictyostelium discoideum (Social amoeba).